A 469-amino-acid polypeptide reads, in one-letter code: Arginine biosynthesis bifunctional protein ArgJ, mitochondrial (469 aa).

The substrate site is built by threonine 199, lysine 228, threonine 239, glutamate 325, asparagine 464, and threonine 469. Residue threonine 239 is the Nucleophile of the active site.

It belongs to the ArgJ family. As to quaternary structure, heterodimer of an alpha and a beta chain. In terms of processing, the alpha and beta chains are autoproteolytically processed from a single precursor protein within the mitochondrion.

The protein localises to the mitochondrion matrix. It catalyses the reaction N(2)-acetyl-L-ornithine + L-glutamate = N-acetyl-L-glutamate + L-ornithine. The enzyme catalyses L-glutamate + acetyl-CoA = N-acetyl-L-glutamate + CoA + H(+). It functions in the pathway amino-acid biosynthesis; L-arginine biosynthesis; L-ornithine and N-acetyl-L-glutamate from L-glutamate and N(2)-acetyl-L-ornithine (cyclic): step 1/1. Its pathway is amino-acid biosynthesis; L-arginine biosynthesis; N(2)-acetyl-L-ornithine from L-glutamate: step 1/4. Catalyzes two activities which are involved in the cyclic version of arginine biosynthesis: the synthesis of acetylglutamate from glutamate and acetyl-CoA, and of ornithine by transacetylation between acetylornithine and glutamate. The protein is Arginine biosynthesis bifunctional protein ArgJ, mitochondrial of Sordaria macrospora (strain ATCC MYA-333 / DSM 997 / K(L3346) / K-hell).